The chain runs to 325 residues: D-alanine--D-alanine ligase (325 aa).

In terms of domain architecture, ATP-grasp spans 121–316 (KYVFEGCGLP…FEELVVRILR (196 aa)). 147 to 202 (VAALGTPLSVKPAHEGSSIGIRKVNSAAELAEAYEAAARLDDLVLVEQWIEGPEFT) contributes to the ATP binding site. Residues Asp-270, Glu-283, and Asn-285 each coordinate Mg(2+).

It belongs to the D-alanine--D-alanine ligase family. Mg(2+) serves as cofactor. Requires Mn(2+) as cofactor.

It is found in the cytoplasm. It carries out the reaction 2 D-alanine + ATP = D-alanyl-D-alanine + ADP + phosphate + H(+). It participates in cell wall biogenesis; peptidoglycan biosynthesis. Functionally, cell wall formation. This is D-alanine--D-alanine ligase from Marinobacter nauticus (strain ATCC 700491 / DSM 11845 / VT8) (Marinobacter aquaeolei).